Consider the following 285-residue polypeptide: Probable ribosomal RNA small subunit methyltransferase A (285 aa).

The S-adenosyl-L-methionine site is built by H29, L31, G58, E79, D107, and N122.

Belongs to the class I-like SAM-binding methyltransferase superfamily. rRNA adenine N(6)-methyltransferase family. RsmA subfamily.

It localises to the cytoplasm. Specifically dimethylates two adjacent adenosines in the loop of a conserved hairpin near the 3'-end of 16S rRNA in the 30S particle. May play a critical role in biogenesis of 30S subunits. The protein is Probable ribosomal RNA small subunit methyltransferase A of Haloarcula marismortui (strain ATCC 43049 / DSM 3752 / JCM 8966 / VKM B-1809) (Halobacterium marismortui).